The chain runs to 3598 residues: Dystrophin, isoforms A/C/F/G/H (3598 aa).

Residues 1–230 (MEPGILIDER…YVMCLYHAME (230 aa)) form an actin-binding region. Calponin-homology (CH) domains follow at residues 12–116 (HIQK…LEFN) and 127–230 (NGVE…HAME). The disordered stretch occupies residues 233–297 (RTRQQEQEQD…SGELKTHSMR (65 aa)). Polar residues predominate over residues 267–286 (NDQTSLGLYTSDSAGSMEQR). Spectrin repeat units lie at residues 307–420 (VEIS…KILM), 423–525 (AEFQ…KLQQ), 851–963 (QDFG…AIEN), 1056–1170 (SHID…LLEH), 1173–1275 (TQLG…LLEQ), and 1381–1483 (SYES…TLER). Disordered stretches follow at residues 1633 to 1696 (ARNT…VMPD), 1716 to 1742 (SLNPQKVTNTPPPKPAKTKRKAPSSPA), 1799 to 1854 (EDSD…ENTS), 1878 to 1941 (RDIL…EPLV), and 2204 to 2233 (GPRISNGKERPDASSAATMSCRSEYNNEPS). The segment covering 1663–1679 (SGESPSSAHTSSSESPT) has biased composition (low complexity). The span at 1803-1816 (SSVRVDSQGKEMRR) shows a compositional bias: basic and acidic residues. 2 positions are modified to phosphoserine: serine 1832 and serine 1838. Over residues 1834 to 1843 (NDEDSAEQEE) the composition is skewed to acidic residues. The segment covering 1878–1893 (RDILRDSEEEEPKTPD) has biased composition (basic and acidic residues). The span at 2218–2233 (SAATMSCRSEYNNEPS) shows a compositional bias: polar residues. 5 Spectrin repeats span residues 2237–2363 (ALAG…QLKN), 2366–2472 (SDSQ…QLHA), 2475–2576 (HSLQ…RLES), 2579–2712 (EHWN…RLDE), and 2715–2819 (TKMR…VLCQ). Positions 2655–2679 (VSDTSDTEANHDSDSRYMSAEEQSR) are disordered. A disordered region spans residues 2822-2852 (AQQTHENGDDGRTTSNSGTIGPLPNLGQSVK). Residues 2849 to 2882 (QSVKPPWERATTAANVPYYIDHERETTHWDHPEM) form the WW domain. The ZZ-type zinc finger occupies 3107 to 3163 (KHQAKCNICKEYPIVGFRYRCLKCFNFDMCQKCFFFGRNAKNHKLTHPMHEYCTTTT). Cysteine 3112, cysteine 3115, cysteine 3127, cysteine 3130, cysteine 3136, cysteine 3139, histidine 3149, and histidine 3153 together coordinate Zn(2+). At serine 3207 the chain carries Phosphoserine. 4 disordered regions span residues 3316-3344 (EQSGMPEDSNGMQHSSSSMTGLSGQGEQG), 3387-3449 (DEPN…KGIM), 3483-3545 (LHQQ…QQHL), and 3560-3598 (ELESINDDLEDSSSSNTTNTTTTTTTTATTEKTCVELQK). 2 stretches are compositionally biased toward polar residues: residues 3325 to 3337 (NGMQHSSSSMTGL) and 3408 to 3439 (ALNSKPNTLQTRSVTASQLNTDSPAKMNQQNG). Low complexity predominate over residues 3485–3499 (QQQQQQLQQQPPQQQ). Residues 3505–3523 (GNGGMDISGGMQTSGGYLG) are compositionally biased toward gly residues. Residues 3534–3545 (SSLMQQQHQQHL) are compositionally biased toward low complexity. Residues 3560–3570 (ELESINDDLED) show a composition bias toward acidic residues. A compositionally biased stretch (low complexity) spans 3571–3589 (SSSSNTTNTTTTTTTTATT).

As to quaternary structure, component of the dystrophin associated protein complex (DAPC). Interacts with Dg, via the Dg WW domain binding sites. As to expression, isoform A, isoform F and isoform G are expressed in the midgut endoderm of stage 12 embryos. In stage 16 embryos, expression is also seen in the pericardial cells, cells at the ectoderm segmental border and cells along the midline of the CNS. During embryogenesis, isoform A is also expressed in the visceral mesoderm, muscle attachment sites, mesectodermal cells at the midline, the gut, and throughout muscle fibers. In larvae, isoform A is found in all muscle fibers, but not detectable in the brain or neuropil.

It is found in the cell membrane. It localises to the sarcolemma. The protein resides in the cytoplasm. The protein localises to the cytoskeleton. In terms of biological role, required for the maintenance of appropriate synaptic retrograde communication and the stabilization of muscle cell architecture or physiology. Both det and Dg are required for maintenance of early dpp signaling in the presumptive crossvein. Isoform A is not required to maintain muscle integrity, but plays a role in neuromuscular homeostasis by regulating neurotransmitter release. May play a role in anchoring the cytoskeleton to the plasma membrane. The polypeptide is Dystrophin, isoforms A/C/F/G/H (Dys) (Drosophila melanogaster (Fruit fly)).